The primary structure comprises 292 residues: 2-(5''-triphosphoribosyl)-3'-dephosphocoenzyme-A synthase (292 aa).

This sequence belongs to the CitG/MdcB family.

It carries out the reaction 3'-dephospho-CoA + ATP = 2'-(5''-triphospho-alpha-D-ribosyl)-3'-dephospho-CoA + adenine. In terms of biological role, catalyzes the formation of 2-(5''-triphosphoribosyl)-3'-dephosphocoenzyme-A, the precursor of the prosthetic group of the holo-acyl carrier protein (gamma chain) of citrate lyase, from ATP and dephospho-CoA. This Escherichia coli O7:K1 (strain IAI39 / ExPEC) protein is 2-(5''-triphosphoribosyl)-3'-dephosphocoenzyme-A synthase.